A 252-amino-acid polypeptide reads, in one-letter code: Triosephosphate isomerase (252 aa).

10 to 12 (NWK) lines the substrate pocket. The active-site Electrophile is histidine 96. Catalysis depends on glutamate 168, which acts as the Proton acceptor. Substrate-binding positions include glycine 174, serine 214, and 235–236 (GG).

This sequence belongs to the triosephosphate isomerase family. In terms of assembly, homodimer.

Its subcellular location is the cytoplasm. It carries out the reaction D-glyceraldehyde 3-phosphate = dihydroxyacetone phosphate. It participates in carbohydrate biosynthesis; gluconeogenesis. It functions in the pathway carbohydrate degradation; glycolysis; D-glyceraldehyde 3-phosphate from glycerone phosphate: step 1/1. Its function is as follows. Involved in the gluconeogenesis. Catalyzes stereospecifically the conversion of dihydroxyacetone phosphate (DHAP) to D-glyceraldehyde-3-phosphate (G3P). This is Triosephosphate isomerase from Streptococcus pneumoniae serotype 2 (strain D39 / NCTC 7466).